The sequence spans 408 residues: LL-diaminopimelate aminotransferase (408 aa).

Substrate-binding residues include Y15 and G42. Residues Y72, 108-109, Y132, N187, Y218, and 246-248 contribute to the pyridoxal 5'-phosphate site; these read SK and SFS. Residues K109, Y132, and N187 each contribute to the substrate site. N6-(pyridoxal phosphate)lysine is present on K249. 2 residues coordinate pyridoxal 5'-phosphate: R257 and N292. The substrate site is built by N292 and R388.

Belongs to the class-I pyridoxal-phosphate-dependent aminotransferase family. LL-diaminopimelate aminotransferase subfamily. As to quaternary structure, homodimer. Requires pyridoxal 5'-phosphate as cofactor.

The enzyme catalyses (2S,6S)-2,6-diaminopimelate + 2-oxoglutarate = (S)-2,3,4,5-tetrahydrodipicolinate + L-glutamate + H2O + H(+). The protein operates within amino-acid biosynthesis; L-lysine biosynthesis via DAP pathway; LL-2,6-diaminopimelate from (S)-tetrahydrodipicolinate (aminotransferase route): step 1/1. Involved in the synthesis of meso-diaminopimelate (m-DAP or DL-DAP), required for both lysine and peptidoglycan biosynthesis. Catalyzes the direct conversion of tetrahydrodipicolinate to LL-diaminopimelate. The sequence is that of LL-diaminopimelate aminotransferase from Prochlorococcus marinus (strain MIT 9515).